The sequence spans 489 residues: MKSIYKYLDTRLFLIGLLVLPFLAVVSCQNDDDDAIPVIHYIRVTDPAKADSTFTDVNPGTMIVVVGEHLGGTQKVYINDQEVSFNRNYVTSTSIILTVPNELELTGQNPELKGEIRIETEHGVAAYNMHVLSPAPYITRISATYPIKPGDQMTVIGGNFYEVQAVYLSTEQPAKDGTRPVDVQEITNYEVNNKYSQITLTAPANLLEEGYLVVECYTSSAVTEFKKNGPKPVVTAVSSTMPVVGSTVTITGQNFIEVSRVNINGEFDIPVGDITTSNTFDEISFVLPQAPTQSGHISVTAIGGTVESAEIFYPLENVILNYDGIGSHVWGDCSFVVADGSSAPYVSNGTCLGITGTVSASNYWWKQSYSNAQWVNTSIIPGNIPIDDLKLQFECFVKEVFTGPVFQIAMCENFDAALNGYVPVSSFTGKTETGKWMQCSVSLSSVVADATYQDFLNRNSTHIGVYATNPGSSQATIEVYFDNFRIVRK.

The first 27 residues, 1–27 (MKSIYKYLDTRLFLIGLLVLPFLAVVS), serve as a signal peptide directing secretion. A lipid anchor (N-palmitoyl cysteine) is attached at cysteine 28. The S-diacylglycerol cysteine moiety is linked to residue cysteine 28. IPT/TIG domains are found at residues 57-103 (VNPG…PNEL), 136-204 (PYIT…TAPA), and 232-304 (PVVT…AIGG).

It localises to the cell outer membrane. It participates in glucan metabolism; xyloglucan degradation. Polysaccharide-binding protein present at the surface of the cell. Probably mediates xyloglucan-binding before xyloglucan transport in the periplasm for degradation. This chain is IPT/TIG domain-containing protein BACOVA_02650, found in Bacteroides ovatus (strain ATCC 8483 / DSM 1896 / JCM 5824 / BCRC 10623 / CCUG 4943 / NCTC 11153).